The primary structure comprises 141 residues: MQLTSFTDYGLRALIYMASLPSGKMTSISEVTEVYGVSRNHMVKIINQLSRAGLVMAVRGKNGGIRLGKPAETIRIGDVVRELEPLTLVNCSHEFCHITAACRLKQVLQQAVQNFLHELDQYTLADMVKENPPLYKLLLVE.

The region spanning 2 to 129 (QLTSFTDYGL…DQYTLADMVK (128 aa)) is the HTH rrf2-type domain. Residues 28 to 51 (ISEVTEVYGVSRNHMVKIINQLSR) constitute a DNA-binding region (H-T-H motif). Positions 91, 96, and 102 each coordinate [2Fe-2S] cluster.

It depends on [2Fe-2S] cluster as a cofactor.

Nitric oxide-sensitive repressor of genes involved in protecting the cell against nitrosative stress. May require iron for activity. The sequence is that of HTH-type transcriptional repressor NsrR from Pectobacterium atrosepticum (strain SCRI 1043 / ATCC BAA-672) (Erwinia carotovora subsp. atroseptica).